The chain runs to 919 residues: Rho guanine nucleotide exchange factor 1 (919 aa).

The RGSL domain maps to 39–230 (DQNSQFQSLE…SLYMRHLGVR (192 aa)). The interval 247 to 402 (VMGNRRSDEP…PPGWRELVPS (156 aa)) is disordered. The segment covering 281–310 (DCRHLKVEVDEKPGPADRKGSLGISSRDRT) has biased composition (basic and acidic residues). The span at 363–379 (STEDNGETESPEPGDDG) shows a compositional bias: acidic residues. At Ser-372 the chain carries Phosphoserine. The region spanning 414 to 603 (KRQEVISELL…REILHHVNQA (190 aa)) is the DH domain. Positions 645-758 (KLVHEGPLTW…WCALITETAG (114 aa)) constitute a PH domain. Thr-693 bears the Phosphothreonine mark. Tyr-736 is subject to Phosphotyrosine; by JAK2. Disordered regions lie at residues 761-800 (KVPA…PADA) and 839-865 (TEED…PTHT). Residues 775 to 787 (PSSTREPLLSSSE) show a composition bias toward low complexity. Residues 864–893 (HTQEVEENLLSLEVVIKQLEELEEEFCRLR) are a coiled coil. The residue at position 904 (Ser-904) is a Phosphoserine.

Interacts with RHOA, GNA12 and GNA13. Homooligomerizes through the coiled coil region. Interacts with CTNNAL1. May interact with CCPG1. Post-translationally, phosphorylated by PKCA. Angiotensin-2 induced Tyr-736 phosphorylation is mediated by JAK2.

The protein localises to the cytoplasm. The protein resides in the membrane. Functionally, seems to play a role in the regulation of RhoA GTPase by guanine nucleotide-binding alpha-12 (GNA12) and alpha-13 (GNA13) subunits. Acts as a GTPase-activating protein (GAP) for GNA12 and GNA13, and as guanine nucleotide exchange factor (GEF) for RhoA GTPase. Activated G alpha 13/GNA13 stimulates the RhoGEF activity through interaction with the RGS-like domain. This GEF activity is inhibited by binding to activated GNA12. Mediates angiotensin-2-induced RhoA activation. In lymphoid follicles, may trigger activation of GNA13 as part of S1PR2-dependent signaling pathway that leads to inhibition of germinal center (GC) B cell growth and migration outside the GC niche. The sequence is that of Rho guanine nucleotide exchange factor 1 (Arhgef1) from Rattus norvegicus (Rat).